A 339-amino-acid chain; its full sequence is Tetraacyldisaccharide 4'-kinase (339 aa).

Thr-53–Thr-60 serves as a coordination point for ATP.

It belongs to the LpxK family.

It catalyses the reaction a lipid A disaccharide + ATP = a lipid IVA + ADP + H(+). It functions in the pathway glycolipid biosynthesis; lipid IV(A) biosynthesis; lipid IV(A) from (3R)-3-hydroxytetradecanoyl-[acyl-carrier-protein] and UDP-N-acetyl-alpha-D-glucosamine: step 6/6. Its function is as follows. Transfers the gamma-phosphate of ATP to the 4'-position of a tetraacyldisaccharide 1-phosphate intermediate (termed DS-1-P) to form tetraacyldisaccharide 1,4'-bis-phosphate (lipid IVA). The sequence is that of Tetraacyldisaccharide 4'-kinase from Bartonella henselae (strain ATCC 49882 / DSM 28221 / CCUG 30454 / Houston 1) (Rochalimaea henselae).